We begin with the raw amino-acid sequence, 238 residues long: Probable transcriptional regulatory protein CHU_3516 (238 aa).

This sequence belongs to the TACO1 family.

The protein resides in the cytoplasm. This Cytophaga hutchinsonii (strain ATCC 33406 / DSM 1761 / CIP 103989 / NBRC 15051 / NCIMB 9469 / D465) protein is Probable transcriptional regulatory protein CHU_3516.